The following is a 355-amino-acid chain: Probable butyrate kinase (355 aa).

Belongs to the acetokinase family.

The protein localises to the cytoplasm. The enzyme catalyses butanoate + ATP = butanoyl phosphate + ADP. This is Probable butyrate kinase from Listeria welshimeri serovar 6b (strain ATCC 35897 / DSM 20650 / CCUG 15529 / CIP 8149 / NCTC 11857 / SLCC 5334 / V8).